Reading from the N-terminus, the 203-residue chain is SPbeta prophage-derived uncharacterized protein YouA (203 aa).

The segment at Met-1–Ile-23 is disordered. Basic and acidic residues predominate over residues Asp-7–Gly-18.

This chain is SPbeta prophage-derived uncharacterized protein YouA (youA), found in Bacillus subtilis (strain 168).